Consider the following 616-residue polypeptide: MAKVIGIDLGTTNSCVAVMEGGEPIVIANPEGNRTTPSVVAFSKTGERMTGQVAKRQAITNPERTIISIKRDMGTDHKVDIDGKKFSPQEISSMILQKLKSDAEAYLGETVTQAVITVPAYFSDAQRQATKDSGKIAGLEVLRIINEPTAAALAYGLDKEHDQKIMVYDLGGGTFDVSILEIGDGVFEVLATNGNNKLGGDDFDQRIIDFLVDTFKKESGIDLKNDKMAMQRLKEAAEKAKVELSGVTSSNINLPFITADASGPKHLDVTLTRAKFDEITADLVENTMVPTRQAMQDAGLTPDKIDKILLVGGSTRIPAVQEAVKKYLGKDPFKGINPDECVAVGAAIQAGVLTGDVTGLLLLDVTPLSLGLETLGGVFTKLIERNTTIPTKKSQVFSTAADGQTSVEIHVLQGEREMAQYNKSLGRFQLTGIPSAPRGVPQIEVTFDIDANGIVHVSAKDLGTGNEQKITITASTNLSDSDIDKAVKEAEKFAAEDKQRKEEIDVRNNADSLIYQSEKSLKDLGDKVSADDKSKIESGVNKVKDALKGTDIEVIKKATEELQQSFYDISSKIYQQTQGAQSDPGAAGFGGQQEAPGAGQDENVVDADYKVVDDDK.

T174 is subject to Phosphothreonine; by autocatalysis. The interval 575–616 (QQTQGAQSDPGAAGFGGQQEAPGAGQDENVVDADYKVVDDDK) is disordered. Positions 607 to 616 (ADYKVVDDDK) are enriched in basic and acidic residues.

It belongs to the heat shock protein 70 family.

Acts as a chaperone. The polypeptide is Chaperone protein DnaK (Ruminiclostridium cellulolyticum (strain ATCC 35319 / DSM 5812 / JCM 6584 / H10) (Clostridium cellulolyticum)).